Here is a 172-residue protein sequence, read N- to C-terminus: Adenine phosphoribosyltransferase (172 aa).

It belongs to the purine/pyrimidine phosphoribosyltransferase family. In terms of assembly, homodimer.

It is found in the cytoplasm. The enzyme catalyses AMP + diphosphate = 5-phospho-alpha-D-ribose 1-diphosphate + adenine. The protein operates within purine metabolism; AMP biosynthesis via salvage pathway; AMP from adenine: step 1/1. Functionally, catalyzes a salvage reaction resulting in the formation of AMP, that is energically less costly than de novo synthesis. This is Adenine phosphoribosyltransferase from Streptococcus equi subsp. zooepidemicus (strain H70).